The chain runs to 179 residues: Negative modulator of initiation of replication (179 aa).

Residues 86 to 87 (AV) form an interaction with DNA region.

The protein belongs to the SeqA family. Homodimer. Polymerizes to form helical filaments.

The protein localises to the cytoplasm. Negative regulator of replication initiation, which contributes to regulation of DNA replication and ensures that replication initiation occurs exactly once per chromosome per cell cycle. Binds to pairs of hemimethylated GATC sequences in the oriC region, thus preventing assembly of replication proteins and re-initiation at newly replicated origins. Repression is relieved when the region becomes fully methylated. This is Negative modulator of initiation of replication from Shewanella woodyi (strain ATCC 51908 / MS32).